Here is a 262-residue protein sequence, read N- to C-terminus: MADDEDDYMSDAFLNQISDVRPGVPMVKRVKEAIKKEALHKEKDIQNRQKSFKEQEKESREAALQSSIGSQNKGFALLQKMGYKAGQGLGKEGAGRVEPVPLNIKTDRGGIGMEEVKKRKADEELQNYRRKVHMKQHLEKKSIEDFRVRKRTEREERQTQGDLRKSQRACEQLDNQKGITVPRDCWYWPEVEKNEESELLEEEIKTEESDEEEELTPLDKLQFLTSYLRGVHYYCIWCGTAYNDEEDLGTNCPGDTAADHDD.

Composition is skewed to basic and acidic residues over residues 39 to 61 (LHKE…ESRE), 114 to 127 (EEVK…ELQN), and 136 to 165 (QHLE…DLRK). 2 disordered regions span residues 39-71 (LHKE…IGSQ) and 88-169 (GLGK…SQRA). Positions 41–62 (KEKDIQNRQKSFKEQEKESREA) form a coiled coil. The 47-residue stretch at 70-116 (SQNKGFALLQKMGYKAGQGLGKEGAGRVEPVPLNIKTDRGGIGMEEV) folds into the G-patch domain.

This sequence belongs to the GPATCH11 family.

The protein localises to the chromosome. It localises to the centromere. It is found in the kinetochore. In Danio rerio (Zebrafish), this protein is G patch domain-containing protein 11 (gpatch11).